Consider the following 603-residue polypeptide: Geraniol synthase, chloroplastic (603 aa).

The N-terminal 50 residues, 1–50 (MALQMIAPFLSSFLPNPRHSLAAHGLTHQKCVSKHISCSTTTPTYSTTVP), are a transit peptide targeting the chloroplast. The (2E)-geranyl diphosphate site is built by Arg301, Asp338, Asp342, Arg479, and Asp482. Mg(2+) contacts are provided by Asp338 and Asp342. The short motif at 338-342 (DDIYD) is the DDXXD motif element. Mg(2+) is bound by residues Asp482, Thr486, and Glu490.

The protein belongs to the terpene synthase family. Tpsb subfamily. As to quaternary structure, homodimer. The cofactor is Mg(2+). Mn(2+) is required as a cofactor. In terms of tissue distribution, expressed in the oil cells of the leaves.

It localises to the plastid. The protein localises to the chloroplast. The enzyme catalyses (2E)-geranyl diphosphate + H2O = (2E)-geraniol + diphosphate. It participates in secondary metabolite biosynthesis; terpenoid biosynthesis. Its function is as follows. Monoterpene synthase that catalyzes the formation of geraniol from geranyl diphosphate. In Cinnamomum tenuipile (Alseodaphne mollis), this protein is Geraniol synthase, chloroplastic (GerS).